A 217-amino-acid chain; its full sequence is Thymidylate kinase (217 aa).

Position 14 to 21 (14 to 21 (GNEGSGKT)) interacts with ATP.

This sequence belongs to the thymidylate kinase family.

It carries out the reaction dTMP + ATP = dTDP + ADP. Phosphorylation of dTMP to form dTDP in both de novo and salvage pathways of dTTP synthesis. This chain is Thymidylate kinase, found in Orientia tsutsugamushi (strain Ikeda) (Rickettsia tsutsugamushi).